Here is a 357-residue protein sequence, read N- to C-terminus: Alanine racemase (357 aa).

Lysine 35 (proton acceptor; specific for D-alanine) is an active-site residue. An N6-(pyridoxal phosphate)lysine modification is found at lysine 35. Arginine 131 lines the substrate pocket. The active-site Proton acceptor; specific for L-alanine is tyrosine 256. Position 304 (methionine 304) interacts with substrate.

It belongs to the alanine racemase family. The cofactor is pyridoxal 5'-phosphate.

It catalyses the reaction L-alanine = D-alanine. It functions in the pathway amino-acid biosynthesis; D-alanine biosynthesis; D-alanine from L-alanine: step 1/1. In terms of biological role, catalyzes the interconversion of L-alanine and D-alanine. May also act on other amino acids. This Legionella pneumophila (strain Lens) protein is Alanine racemase (alr).